Reading from the N-terminus, the 176-residue chain is Ribosome maturation factor RimM (176 aa).

The PRC barrel domain occupies 93 to 166; it reads ADEYYHADLI…QVVIEPPNEI (74 aa).

It belongs to the RimM family. In terms of assembly, binds ribosomal protein uS19.

It localises to the cytoplasm. In terms of biological role, an accessory protein needed during the final step in the assembly of 30S ribosomal subunit, possibly for assembly of the head region. Essential for efficient processing of 16S rRNA. May be needed both before and after RbfA during the maturation of 16S rRNA. It has affinity for free ribosomal 30S subunits but not for 70S ribosomes. The polypeptide is Ribosome maturation factor RimM (Rhodopseudomonas palustris (strain ATCC BAA-98 / CGA009)).